The primary structure comprises 398 residues: Succinate--CoA ligase [ADP-forming] subunit beta (398 aa).

The 245-residue stretch at 9–253 folds into the ATP-grasp domain; that stretch reads KEILASYGVR…IREENPIEVE (245 aa). ATP is bound by residues Lys50, 57–59, Val106, and Glu116; that span reads GRG. Positions 208 and 222 each coordinate Mg(2+). Residues Asn273 and 330–332 contribute to the substrate site; that span reads GIV.

Belongs to the succinate/malate CoA ligase beta subunit family. Heterotetramer of two alpha and two beta subunits. Mg(2+) is required as a cofactor.

It catalyses the reaction succinate + ATP + CoA = succinyl-CoA + ADP + phosphate. The enzyme catalyses GTP + succinate + CoA = succinyl-CoA + GDP + phosphate. Its pathway is carbohydrate metabolism; tricarboxylic acid cycle; succinate from succinyl-CoA (ligase route): step 1/1. Functionally, succinyl-CoA synthetase functions in the citric acid cycle (TCA), coupling the hydrolysis of succinyl-CoA to the synthesis of either ATP or GTP and thus represents the only step of substrate-level phosphorylation in the TCA. The beta subunit provides nucleotide specificity of the enzyme and binds the substrate succinate, while the binding sites for coenzyme A and phosphate are found in the alpha subunit. This is Succinate--CoA ligase [ADP-forming] subunit beta from Flavobacterium psychrophilum (strain ATCC 49511 / DSM 21280 / CIP 103535 / JIP02/86).